A 945-amino-acid chain; its full sequence is Endo-1,4-beta-xylanase 1 (945 aa).

A compositionally biased stretch (basic and acidic residues) spans 16-41 (NGDRNPDKKSRESMEVSRKDNEEPEK). The tract at residues 16-50 (NGDRNPDKKSRESMEVSRKDNEEPEKQNNNNVASI) is disordered. 3 consecutive CBM-cenC domains span residues 57-197 (NVIV…EGPS), 227-362 (IVVN…IEGP), and 397-541 (NILT…GPSS). 7 N-linked (GlcNAc...) asparagine glycosylation sites follow: asparagine 86, asparagine 239, asparagine 305, asparagine 349, asparagine 417, asparagine 453, and asparagine 687. Residues 589–884 (SGASVRVRQI…NEAGKRFLAV (296 aa)) form the GH10 domain. Catalysis depends on glutamate 718, which acts as the Proton donor. Glutamate 819 (nucleophile) is an active-site residue.

Belongs to the glycosyl hydrolase 10 (cellulase F) family. Predominantly expressed in vascular bundles, but not in vessel cells. Mostly expressed in stems, at lower levels in roots, and weakly in inflorescences and seedlings.

Its subcellular location is the secreted. It localises to the cell wall. The catalysed reaction is Endohydrolysis of (1-&gt;4)-beta-D-xylosidic linkages in xylans.. It functions in the pathway glycan degradation; xylan degradation. Functionally, binds to and hydrolyzes insoluble and soluble xylan substrates. Exhibits xylanase activity. The polypeptide is Endo-1,4-beta-xylanase 1 (Arabidopsis thaliana (Mouse-ear cress)).